The following is a 275-amino-acid chain: MAALDGLPPLRDVIQRHGLDARKALGQNFLLDLNLTQKIARTAGALEDATVFEVGPGPGGLTRAILALGARKVIAIERDTRCLPALAEIADHYPGRLEVIEGDALKTDFETLAPQGPIKIIANLPYNVGTQLLVNWLLPKAWPPFWQSLTLMFQKEVGERIVANEDDDHYGRLGVLCGWRTEARMAFDVPPQAFTPPPKVTSTVVQLTPRENPIPCAVSNLEKVTQAAFGQRRKMLRQSLKPLGGERLLVKAGIDPARRAETLSVKEFCLLANSL.

S-adenosyl-L-methionine contacts are provided by N28, L30, G55, E77, D103, and N123.

It belongs to the class I-like SAM-binding methyltransferase superfamily. rRNA adenine N(6)-methyltransferase family. RsmA subfamily.

It is found in the cytoplasm. The catalysed reaction is adenosine(1518)/adenosine(1519) in 16S rRNA + 4 S-adenosyl-L-methionine = N(6)-dimethyladenosine(1518)/N(6)-dimethyladenosine(1519) in 16S rRNA + 4 S-adenosyl-L-homocysteine + 4 H(+). Specifically dimethylates two adjacent adenosines (A1518 and A1519) in the loop of a conserved hairpin near the 3'-end of 16S rRNA in the 30S particle. May play a critical role in biogenesis of 30S subunits. The chain is Ribosomal RNA small subunit methyltransferase A from Rhizobium johnstonii (strain DSM 114642 / LMG 32736 / 3841) (Rhizobium leguminosarum bv. viciae).